The primary structure comprises 87 residues: Small ribosomal subunit protein bS18 (87 aa).

Belongs to the bacterial ribosomal protein bS18 family. In terms of assembly, part of the 30S ribosomal subunit. Forms a tight heterodimer with protein bS6.

In terms of biological role, binds as a heterodimer with protein bS6 to the central domain of the 16S rRNA, where it helps stabilize the platform of the 30S subunit. This Mesomycoplasma hyopneumoniae (strain 232) (Mycoplasma hyopneumoniae) protein is Small ribosomal subunit protein bS18.